The chain runs to 399 residues: tRNA-specific 2-thiouridylase MnmA (399 aa).

ATP-binding positions include 18–25 (AMSGGVDS) and leucine 44. The Nucleophile role is filled by cysteine 112. The cysteines at positions 112 and 213 are disulfide-linked. An ATP-binding site is contributed by glycine 136. The tract at residues 163–165 (RDQ) is interaction with tRNA. Cysteine 213 functions as the Cysteine persulfide intermediate in the catalytic mechanism.

This sequence belongs to the MnmA/TRMU family.

The protein localises to the cytoplasm. The catalysed reaction is S-sulfanyl-L-cysteinyl-[protein] + uridine(34) in tRNA + AH2 + ATP = 2-thiouridine(34) in tRNA + L-cysteinyl-[protein] + A + AMP + diphosphate + H(+). In terms of biological role, catalyzes the 2-thiolation of uridine at the wobble position (U34) of tRNA, leading to the formation of s(2)U34. This chain is tRNA-specific 2-thiouridylase MnmA, found in Rhizobium leguminosarum bv. trifolii (strain WSM2304).